The primary structure comprises 429 residues: Probable proton-coupled zinc antiporter SLC30A4 (429 aa).

Residues methionine 1–arginine 113 are Cytoplasmic-facing. A helical membrane pass occupies residues leucine 114 to isoleucine 134. Residues alanine 135–aspartate 143 are Lumenal-facing. A helical transmembrane segment spans residues alanine 144 to serine 164. Positions 146 and 150 each coordinate Zn(2+). The Cytoplasmic segment spans residues serine 165 to arginine 178. Residues leucine 179–leucine 199 form a helical membrane-spanning segment. Residues tyrosine 200–aspartate 216 lie on the Lumenal side of the membrane. The chain crosses the membrane as a helical span at residues isoleucine 217 to asparagine 237. Residues glutamine 238 to alanine 274 are Cytoplasmic-facing. Residues glycine 240 to histidine 264 form a zinc binding region. Residues phenylalanine 275–isoleucine 295 form a helical membrane-spanning segment. 2 residues coordinate Zn(2+): histidine 277 and aspartate 281. Topologically, residues arginine 296–tyrosine 310 are lumenal. A helical membrane pass occupies residues valine 311 to isoleucine 331. Residues leucine 332 to proline 429 lie on the Cytoplasmic side of the membrane.

This sequence belongs to the cation diffusion facilitator (CDF) transporter (TC 2.A.4) family. SLC30A subfamily. Homodimer; dityrosine-linked. Homodimerization could be specific of the human protein and enhances the zinc transport efficiency. Interacts with TMEM163. Homodimerization through dityrosine bonds is stimulated by oxidative stress.

Its subcellular location is the endosome membrane. The protein resides in the late endosome membrane. The protein localises to the lysosome membrane. It catalyses the reaction Zn(2+)(in) + 2 H(+)(out) = Zn(2+)(out) + 2 H(+)(in). Probable proton-coupled zinc ion antiporter mediating zinc import from cytoplasm potentially into the endocytic compartment. Controls zinc deposition in milk. This is Probable proton-coupled zinc antiporter SLC30A4 from Homo sapiens (Human).